The chain runs to 276 residues: Alpha N-terminal protein methyltransferase 1 (276 aa).

The tract at residues 1-57 (MTTTLEEQLSDKLQMMDETTDKVQGSSKQKDDSSIAASSDAKTASPSSSDSSTKVAA) is disordered. Low complexity predominate over residues 34–57 (SIAASSDAKTASPSSSDSSTKVAA). S-adenosyl-L-methionine contacts are provided by residues glycine 114, arginine 119, 136 to 138 (EQD), 167 to 168 (LQ), and glutamine 182.

Belongs to the methyltransferase superfamily. NTM1 family.

It catalyses the reaction N-terminal L-alanyl-L-prolyl-L-lysyl-[protein] + 3 S-adenosyl-L-methionine = N-terminal N,N,N-trimethyl-L-alanyl-L-prolyl-L-lysyl-[protein] + 3 S-adenosyl-L-homocysteine + 3 H(+). The enzyme catalyses N-terminal L-seryl-L-prolyl-L-lysyl-[protein] + 3 S-adenosyl-L-methionine = N-terminal N,N,N-trimethyl-L-seryl-L-prolyl-L-lysyl-[protein] + 3 S-adenosyl-L-homocysteine + 3 H(+). The catalysed reaction is N-terminal L-prolyl-L-prolyl-L-lysyl-[protein] + 2 S-adenosyl-L-methionine = N-terminal N,N-dimethyl-L-prolyl-L-prolyl-L-lysyl-[protein] + 2 S-adenosyl-L-homocysteine + 2 H(+). Its function is as follows. Alpha-N-methyltransferase that methylates the N-terminus of target proteins containing the N-terminal motif [Ala/Pro/Ser]-Pro-Lys when the initiator Met is cleaved. Specifically catalyzes mono-, di- or tri-methylation of exposed alpha-amino group of Ala or Ser residue in the [Ala/Ser]-Pro-Lys motif and mono- or di-methylation of Pro in the Pro-Pro-Lys motif. This is Alpha N-terminal protein methyltransferase 1 (Ntmt) from Drosophila melanogaster (Fruit fly).